Here is a 351-residue protein sequence, read N- to C-terminus: Ion-translocating oxidoreductase complex subunit D (351 aa).

The next 3 helical transmembrane spans lie at 37–57 (YFFGWGTLLQVLLAIITAILA), 88–108 (AIPPLSPWWLTVIGVFFAIVI), and 123–143 (PAMAAYVVLLISFPVQMTTWL). Thr187 is subject to FMN phosphoryl threonine. Transmembrane regions (helical) follow at residues 214-234 (FAGLGWLWVNVGFLLGGLFLL), 241-261 (WHIPVSFLASLFIVSSLFAVF), 270-290 (IFNLFSGATMLGAFFIATDPV), and 300-317 (LYYGALIGLLVYMIRSWG).

This sequence belongs to the NqrB/RnfD family. The complex is composed of six subunits: RnfA, RnfB, RnfC, RnfD, RnfE and RnfG. Requires FMN as cofactor.

The protein resides in the cell inner membrane. Its function is as follows. Part of a membrane-bound complex that couples electron transfer with translocation of ions across the membrane. This chain is Ion-translocating oxidoreductase complex subunit D, found in Aliivibrio salmonicida (strain LFI1238) (Vibrio salmonicida (strain LFI1238)).